We begin with the raw amino-acid sequence, 240 residues long: UDP-2,3-diacylglucosamine hydrolase (240 aa).

Mn(2+)-binding residues include Asp-9, His-11, Asp-43, Asn-81, and His-116. 81–82 lines the substrate pocket; sequence NR. Asp-124, Ser-162, Lys-166, Lys-169, and His-197 together coordinate substrate. Residues His-197 and His-199 each coordinate Mn(2+).

It belongs to the LpxH family. The cofactor is Mn(2+).

Its subcellular location is the cell inner membrane. It carries out the reaction UDP-2-N,3-O-bis[(3R)-3-hydroxytetradecanoyl]-alpha-D-glucosamine + H2O = 2-N,3-O-bis[(3R)-3-hydroxytetradecanoyl]-alpha-D-glucosaminyl 1-phosphate + UMP + 2 H(+). Its pathway is glycolipid biosynthesis; lipid IV(A) biosynthesis; lipid IV(A) from (3R)-3-hydroxytetradecanoyl-[acyl-carrier-protein] and UDP-N-acetyl-alpha-D-glucosamine: step 4/6. Hydrolyzes the pyrophosphate bond of UDP-2,3-diacylglucosamine to yield 2,3-diacylglucosamine 1-phosphate (lipid X) and UMP by catalyzing the attack of water at the alpha-P atom. Involved in the biosynthesis of lipid A, a phosphorylated glycolipid that anchors the lipopolysaccharide to the outer membrane of the cell. The protein is UDP-2,3-diacylglucosamine hydrolase of Neisseria meningitidis serogroup A / serotype 4A (strain DSM 15465 / Z2491).